The following is a 303-amino-acid chain: D-alanine--D-alanine ligase (303 aa).

An ATP-grasp domain is found at 104 to 300 (KLMWQAVGLP…FEKLVERVLE (197 aa)). 132-187 (IAKLGLPVFVKPSSEGSSVGVTKVKTVEQLLPAVEEALKFDSIVLVEAFLAGKEYS) contributes to the ATP binding site. Mg(2+) is bound by residues Asp254, Glu267, and Asn269.

The protein belongs to the D-alanine--D-alanine ligase family. Mg(2+) is required as a cofactor. Requires Mn(2+) as cofactor.

The protein resides in the cytoplasm. The catalysed reaction is 2 D-alanine + ATP = D-alanyl-D-alanine + ADP + phosphate + H(+). Its pathway is cell wall biogenesis; peptidoglycan biosynthesis. Cell wall formation. The sequence is that of D-alanine--D-alanine ligase from Actinobacillus pleuropneumoniae serotype 5b (strain L20).